Reading from the N-terminus, the 89-residue chain is Cell division topological specificity factor (89 aa).

This sequence belongs to the MinE family.

Prevents the cell division inhibition by proteins MinC and MinD at internal division sites while permitting inhibition at polar sites. This ensures cell division at the proper site by restricting the formation of a division septum at the midpoint of the long axis of the cell. This is Cell division topological specificity factor from Serratia proteamaculans (strain 568).